A 259-amino-acid polypeptide reads, in one-letter code: Caffeoyl-CoA O-methyltransferase 1 (259 aa).

Residues 1–14 show a composition bias toward low complexity; sequence MATTTTEATKTSST. Positions 1–29 are disordered; it reads MATTTTEATKTSSTNGEDQKQSQNLRHQE. An N-acetylalanine modification is found at Ala2. Lys33 is a substrate binding site. Residues Thr75, Glu97, 99–100, Ser105, Asp123, and Ala152 contribute to the S-adenosyl-L-methionine site; that span reads GV. Asp175 serves as a coordination point for substrate. Asp175 lines the a divalent metal cation pocket. Residue Asp177 coordinates S-adenosyl-L-methionine. The a divalent metal cation site is built by Asp201 and Asn202. Asn206 is a binding site for substrate.

It belongs to the class I-like SAM-binding methyltransferase superfamily. Cation-dependent O-methyltransferase family. CCoAMT subfamily. It depends on a divalent metal cation as a cofactor. In terms of tissue distribution, expressed in stems and roots. Detected in leaves, siliques, flower buds, flowers. Expressed in the tapetum, but not in the endothecium. Detected in the vascular system of leaves and all flower organs, including stigma, stamens, petals and sepals.

It carries out the reaction (E)-caffeoyl-CoA + S-adenosyl-L-methionine = (E)-feruloyl-CoA + S-adenosyl-L-homocysteine + H(+). The protein operates within aromatic compound metabolism; phenylpropanoid biosynthesis. Functionally, methylates caffeoyl-CoA to feruloyl-CoA. Has a very low activity with caffeic acid and esculetin. Involved in scopoletin biosynthesis in roots. The chain is Caffeoyl-CoA O-methyltransferase 1 (CCOAOMT1) from Arabidopsis thaliana (Mouse-ear cress).